We begin with the raw amino-acid sequence, 457 residues long: Heme sensor protein HssS (457 aa).

Transmembrane regions (helical) follow at residues 9 to 29 and 164 to 184; these read IAIYSITVILFSALISFVLTN and TFLAVLLMLLLFISISLVIAS. Residues 186–238 form the HAMP domain; it reads YSIIRPVKKLKLATERLIDGDFETPIKQTRKDEIGTLQYHFNKMRESLGQVDQ. Residues 246–456 form the Histidine kinase domain; it reads NVSHEIKTPL…TFTITLPNNS (211 aa). A Phosphohistidine; by autocatalysis modification is found at H249.

Post-translationally, autophosphorylated.

It is found in the cell membrane. The enzyme catalyses ATP + protein L-histidine = ADP + protein N-phospho-L-histidine.. Its function is as follows. Member of the two-component regulatory system HssS/HssR involved in intracellular heme homeostasis and tempering of staphylococcal virulence. HssS functions as a heme sensor histidine kinase which is autophosphorylated at a histidine residue and transfers its phosphate group to an aspartate residue of HssR. HssR/HssS activates the expression of hrtAB, an efflux pump, in response to extracellular heme, hemin, hemoglobin or blood. The chain is Heme sensor protein HssS (hssS) from Staphylococcus aureus (strain MSSA476).